The sequence spans 473 residues: Photosystem II CP43 reaction center protein (473 aa).

A propeptide spanning residues 1-14 (MKTLYSLRRFYPVE) is cleaved from the precursor. T15 is modified (N-acetylthreonine). T15 carries the post-translational modification Phosphothreonine. 5 helical membrane passes run 69–93 (LFEV…PHLA), 134–155 (LLGP…KDRN), 178–200 (KALY…RKIT), 255–275 (KPFA…LSYS), and 291–312 (WFNN…ASQA). Residue E367 participates in [CaMn4O5] cluster binding. A helical transmembrane segment spans residues 447–471 (RARAAAAGFEKGIDRDFEPVLSMTP).

This sequence belongs to the PsbB/PsbC family. PsbC subfamily. PSII is composed of 1 copy each of membrane proteins PsbA, PsbB, PsbC, PsbD, PsbE, PsbF, PsbH, PsbI, PsbJ, PsbK, PsbL, PsbM, PsbT, PsbX, PsbY, PsbZ, Psb30/Ycf12, at least 3 peripheral proteins of the oxygen-evolving complex and a large number of cofactors. It forms dimeric complexes. Requires Binds multiple chlorophylls and provides some of the ligands for the Ca-4Mn-5O cluster of the oxygen-evolving complex. It may also provide a ligand for a Cl- that is required for oxygen evolution. PSII binds additional chlorophylls, carotenoids and specific lipids. as cofactor.

The protein localises to the plastid. Its subcellular location is the chloroplast thylakoid membrane. Functionally, one of the components of the core complex of photosystem II (PSII). It binds chlorophyll and helps catalyze the primary light-induced photochemical processes of PSII. PSII is a light-driven water:plastoquinone oxidoreductase, using light energy to abstract electrons from H(2)O, generating O(2) and a proton gradient subsequently used for ATP formation. In Drimys granadensis, this protein is Photosystem II CP43 reaction center protein.